The chain runs to 247 residues: MQTQVLFEHPLNEKMRTWLRIEFLIQQLTVNLPIADHAGALHFFRNVSELLDVFERGEVRTELLKELDRQQRKLQTWIGVPGVDQSRIEALIQQLKAAGSVLISAPRIGQFLREDRLIALVRQRLSIPGGCCSFDLPTLHIWLHLPQAQRDSQVETWIASLNPLTQALTMVLDLIRQSAPFRKQTSLNGFYQDNGGDADLLRLNLSLDSQLYPQISGHKSRFAIRFMPLDTENGQVPERLDFELACC.

The protein belongs to the ZapD family. Interacts with FtsZ.

Its subcellular location is the cytoplasm. Its function is as follows. Cell division factor that enhances FtsZ-ring assembly. Directly interacts with FtsZ and promotes bundling of FtsZ protofilaments, with a reduction in FtsZ GTPase activity. The protein is Cell division protein ZapD of Shigella dysenteriae serotype 1 (strain Sd197).